A 48-amino-acid chain; its full sequence is Large ribosomal subunit protein bL33B (48 aa).

The protein belongs to the bacterial ribosomal protein bL33 family.

This Mycoplasmoides gallisepticum (strain R(low / passage 15 / clone 2)) (Mycoplasma gallisepticum) protein is Large ribosomal subunit protein bL33B (rpmG 2).